Reading from the N-terminus, the 153-residue chain is D-aminoacyl-tRNA deacylase (153 aa).

Positions 137 to 138 match the Gly-cisPro motif, important for rejection of L-amino acids motif; that stretch reads GP.

Belongs to the DTD family. Homodimer.

It is found in the cytoplasm. The catalysed reaction is glycyl-tRNA(Ala) + H2O = tRNA(Ala) + glycine + H(+). The enzyme catalyses a D-aminoacyl-tRNA + H2O = a tRNA + a D-alpha-amino acid + H(+). Its function is as follows. An aminoacyl-tRNA editing enzyme that deacylates mischarged D-aminoacyl-tRNAs. Also deacylates mischarged glycyl-tRNA(Ala), protecting cells against glycine mischarging by AlaRS. Acts via tRNA-based rather than protein-based catalysis; rejects L-amino acids rather than detecting D-amino acids in the active site. By recycling D-aminoacyl-tRNA to D-amino acids and free tRNA molecules, this enzyme counteracts the toxicity associated with the formation of D-aminoacyl-tRNA entities in vivo and helps enforce protein L-homochirality. In Myxococcus xanthus (strain DK1622), this protein is D-aminoacyl-tRNA deacylase.